Reading from the N-terminus, the 412-residue chain is Serine hydroxymethyltransferase (412 aa).

Residues leucine 117 and glycine 121 to leucine 123 each bind (6S)-5,6,7,8-tetrahydrofolate. At lysine 226 the chain carries N6-(pyridoxal phosphate)lysine.

It belongs to the SHMT family. As to quaternary structure, homodimer. Pyridoxal 5'-phosphate serves as cofactor.

Its subcellular location is the cytoplasm. The enzyme catalyses (6R)-5,10-methylene-5,6,7,8-tetrahydrofolate + glycine + H2O = (6S)-5,6,7,8-tetrahydrofolate + L-serine. It participates in one-carbon metabolism; tetrahydrofolate interconversion. It functions in the pathway amino-acid biosynthesis; glycine biosynthesis; glycine from L-serine: step 1/1. Its function is as follows. Catalyzes the reversible interconversion of serine and glycine with tetrahydrofolate (THF) serving as the one-carbon carrier. This reaction serves as the major source of one-carbon groups required for the biosynthesis of purines, thymidylate, methionine, and other important biomolecules. Also exhibits THF-independent aldolase activity toward beta-hydroxyamino acids, producing glycine and aldehydes, via a retro-aldol mechanism. This chain is Serine hydroxymethyltransferase, found in Staphylococcus aureus (strain MW2).